The sequence spans 740 residues: Catalase-peroxidase (740 aa).

A cross-link (tryptophyl-tyrosyl-methioninium (Trp-Tyr) (with M-256)) is located at residues 102-229 (WHAAGTYRTG…LAAIQMGLIY (128 aa)). Catalysis depends on H103, which acts as the Proton acceptor. Residues 111–130 (GDGRGGSSSGQQRFAPLNSW) form a disordered region. A cross-link (tryptophyl-tyrosyl-methioninium (Tyr-Met) (with W-102)) is located at residues 229-256 (YVNPEGPGGDPHDPEGMARDMRETFARM). A heme b-binding site is contributed by H271.

The protein belongs to the peroxidase family. Peroxidase/catalase subfamily. As to quaternary structure, homodimer or homotetramer. Requires heme b as cofactor. Formation of the three residue Trp-Tyr-Met cross-link is important for the catalase, but not the peroxidase activity of the enzyme.

The catalysed reaction is H2O2 + AH2 = A + 2 H2O. It carries out the reaction 2 H2O2 = O2 + 2 H2O. Functionally, bifunctional enzyme with both catalase and broad-spectrum peroxidase activity. The protein is Catalase-peroxidase of Erythrobacter litoralis (strain HTCC2594).